Consider the following 601-residue polypeptide: MEIALVPLENGGAMTVRGGGEAGTGCSQAIGGELQCPPTAGLSDGPKEPAPRARGTQRGVDPGGRPLPPLPQDPQQPRRLPPEDEEGEGDPALGMAEDQVLGAGSLHHQRVLINISGLRFETQLGTLAQFPNTLLGDPAKRLRYFDPLRNEYFFDRNRPSFDGILYYYQSGGRLRRPVNVSLDVFADEIRFYQLGDEAMERFREDEGFIKEEEKPLPRNEFQRQVWLIFEYPESSGSARGIAIVSVLVILISIITFCLETLPEFRDERELLRHPPVPHQPLGPSRGANGSGPLAPPSGPTVAPLLPRTLADPFFIVETTCVIWFTFELLVRFFACPSKAEFSRNIMNIIDVVAIFPYFITLGTELAEQPGGGGGGQNGQQAMSLAILRVIRLVRVFRIFKLSRHSKGLQILGKTLQASMRELGLLIFFLFIGVILFSSAVYFAEADNQETHFSSIPDAFWWAVVTMTTVGYGDMRPVTVGGKIVGSLCAIAGVLTIALPVPVIVSNFNYFYHRETDHEEQAALKEEQGSQSHGTGLDSGGPRKASWSKGSLCKAGVSLENADGARRGSCPLEKCNLKAKSNVDLRRSLYALCLDTSRETDL.

A tetramerization domain region spans residues 1–200 (MEIALVPLEN…FYQLGDEAME (200 aa)). Over 1–236 (MEIALVPLEN…LIFEYPESSG (236 aa)) the chain is Cytoplasmic. Residues 19-93 (GGEAGTGCSQ…DEEGEGDPAL (75 aa)) are disordered. A compositionally biased stretch (pro residues) spans 65-74 (RPLPPLPQDP). K210 participates in a covalent cross-link: Glycyl lysine isopeptide (Lys-Gly) (interchain with G-Cter in SUMO). A helical transmembrane segment spans residues 237-258 (SARGIAIVSVLVILISIITFCL). Residues 259–312 (ETLPEFRDERELLRHPPVPHQPLGPSRGANGSGPLAPPSGPTVAPLLPRTLADP) lie on the Extracellular side of the membrane. The disordered stretch occupies residues 275-297 (PVPHQPLGPSRGANGSGPLAPPS). An N-linked (GlcNAc...) asparagine glycan is attached at N288. A helical transmembrane segment spans residues 313–334 (FFIVETTCVIWFTFELLVRFFA). C335 carries the S-palmitoyl cysteine lipid modification. Topologically, residues 335 to 345 (CPSKAEFSRNI) are cytoplasmic. A helical membrane pass occupies residues 346–366 (MNIIDVVAIFPYFITLGTELA). Topologically, residues 367 to 383 (EQPGGGGGGQNGQQAMS) are extracellular. The chain crosses the membrane as a helical; Voltage-sensor span at residues 384–404 (LAILRVIRLVRVFRIFKLSRH). Over 405–419 (SKGLQILGKTLQASM) the chain is Cytoplasmic. The interval 406-419 (KGLQILGKTLQASM) is S4-S5 linker. Residues 420–441 (RELGLLIFFLFIGVILFSSAVY) form a helical membrane-spanning segment. Topologically, residues 442-455 (FAEADNQETHFSSI) are extracellular. Positions 456-467 (PDAFWWAVVTMT) form an intramembrane region, helical. The Selectivity filter signature appears at 468–473 (TVGYGD). The stretch at 468 to 475 (TVGYGDMR) is an intramembrane region. The Extracellular portion of the chain corresponds to 476 to 482 (PVTVGGK). Residues 483 to 511 (IVGSLCAIAGVLTIALPVPVIVSNFNYFY) form a helical membrane-spanning segment. Topologically, residues 512-601 (HRETDHEEQA…CLDTSRETDL (90 aa)) are cytoplasmic. A disordered region spans residues 521-545 (AALKEEQGSQSHGTGLDSGGPRKAS). Residue K524 forms a Glycyl lysine isopeptide (Lys-Gly) (interchain with G-Cter in SUMO) linkage. The short motif at 599–601 (TDL) is the PDZ-binding element.

Belongs to the potassium channel family. A (Shaker) (TC 1.A.1.2) subfamily. Kv1.5/KCNA5 sub-subfamily. As to quaternary structure, homotetramer and heterotetramer of potassium channel proteins. Interacts with DLG1, which enhances channel currents. Forms a ternary complex with DLG1 and CAV3. Interacts with KCNAB1. Interacts with UBE2I. Interacts with XIRP2; the interaction is required for normal action potential configuration in the heart. In terms of processing, glycosylated. Post-translationally, sumoylated on Lys-210, and Lys-524, preferentially with SUMO3. Sumoylation regulates the voltage sensitivity of the channel.

Its subcellular location is the cell membrane. The enzyme catalyses K(+)(in) = K(+)(out). Voltage-gated potassium channel that mediates transmembrane potassium transport in excitable membranes. Forms tetrameric potassium-selective channels through which potassium ions pass in accordance with their electrochemical gradient. The channel alternates between opened and closed conformations in response to the voltage difference across the membrane. Can form functional homotetrameric channels and heterotetrameric channels that contain variable proportions of KCNA1, KCNA2, KCNA4, KCNA5, and possibly other family members as well; channel properties depend on the type of alpha subunits that are part of the channel. Channel properties are modulated by cytoplasmic beta subunits that regulate the subcellular location of the alpha subunits and promote rapid inactivation. Homotetrameric channels display rapid activation and slow inactivation. Required for normal electrical conduction including formation of the infranodal ventricular conduction system and normal action potential configuration, as a result of its interaction with XIRP2. May play a role in regulating the secretion of insulin in normal pancreatic islets. The protein is Potassium voltage-gated channel subfamily A member 5 (KCNA5) of Mustela putorius furo (European domestic ferret).